A 290-amino-acid polypeptide reads, in one-letter code: Endonuclease 2 (290 aa).

The signal sequence occupies residues 1–27 (MANQKGLHVVMMIITVWLLYAAPNIHG). 2 residues coordinate a divalent metal cation: Trp-28 and His-33. 28–33 (WGKEGH) provides a ligand contact to substrate. Cys-37 and Cys-68 form a disulfide bridge. Positions 72 and 85 each coordinate a divalent metal cation. Substrate-binding positions include 72–76 (DRVKF), 85–88 (HYIN), and 94–99 (SYQYNR). Intrachain disulfides connect Cys-93–Cys-245, Cys-101–Cys-111, and Cys-226–Cys-232. Substrate is bound by residues Asn-118 and Tyr-136. Asn-118 carries N-linked (GlcNAc...) asparagine glycosylation. Asn-137 is a glycosylation site (N-linked (GlcNAc...) asparagine). His-147, Asp-151, His-157, His-181, and Asp-185 together coordinate a divalent metal cation. Residues 147-196 (HFMGDIHQPLHVSYASDKGGNTIEVHWYTRKANLHHIWDSNIIETAEADL) form a substrate binding region. Asn-211 carries an N-linked (GlcNAc...) asparagine glycan. A propeptide spans 283–290 (ATLNRIFG) (removed in mature form).

Belongs to the nuclease type I family. As to quaternary structure, monomer. The cofactor is Mn(2+). Ca(2+) serves as cofactor. Zn(2+) is required as a cofactor. N-glycosylation is required for enzymatic stability and activity.

The catalysed reaction is Endonucleolytic cleavage to 5'-phosphomononucleotide and 5'-phosphooligonucleotide end-products.. SsDNase activity is inhibited by the divalent cation chelator EDTA and the reducing agent DTT. Divalent metal ions (e.g. Ca(2+), Mg(2+) and Zn(2+)) and DTT represses RNase activity. RNase activity is enhanced by EDTA. Also repressed by vanadate (VO(4)(3-)) and phosphate (PO(4)(3-)) by occupying the active site. Functionally, endonuclease mostly active on RNA and ssDNA, and to a lower extent, on dsDNA. Can cleave mismatch regions in heteroduplex DNA containing single base pair mismatches or insertion/deletion bases. In contradiction with PubMed:22506810, cannot hydrolyze single-stranded DNA and does not cleave mismatches. The sequence is that of Endonuclease 2 from Arabidopsis thaliana (Mouse-ear cress).